An 86-amino-acid chain; its full sequence is Mu-theraphotoxin-Hhn1b 3 (86 aa).

The first 21 residues, 1 to 21, serve as a signal peptide directing secretion; the sequence is MKASMFLALTGLALLFVVCYA. Residues 22–49 constitute a propeptide that is removed on maturation; that stretch reads SESEEKEFSNELLSSVLAVDDNSKGEER. Cystine bridges form between cysteine 51–cysteine 66, cysteine 58–cysteine 73, and cysteine 65–cysteine 80. Isoleucine 84 bears the Isoleucine amide mark.

Belongs to the neurotoxin 10 (Hwtx-1) family. 22 (Htx-4) subfamily. In terms of assembly, monomer. In terms of tissue distribution, expressed by the venom gland.

The protein resides in the secreted. In terms of biological role, neurotoxin. Selectively blocks neuronal tetrodotoxin-sensitive voltage-gated sodium channels (Nav) with an IC(50) of 44.6 nM. Does not affect tetrodotoxin-resistant voltage-gated sodium channels or calcium channels. The polypeptide is Mu-theraphotoxin-Hhn1b 3 (Cyriopagopus hainanus (Chinese bird spider)).